The following is a 382-amino-acid chain: MTTLASSISERYIGLMSGTSLDGVDGVLVDFSGPRPMLLTDAYVPFPPALRQAFFDLQSAGHNEIHREALAANALADLYAECVAQLLHESGCDPREVRAIGAHGQTIRHQPGEHDGIGYTRQTQHAAVLAERTGIDVIADFRSRDIAAGGQGAPLVPAVHRALFALPDAWRVVCNIGGIANLTVLPPQQSDARDRVLGFDCGPGNALLDYWVHAHRGEAYDRNGEWARSGWIDAALLETLRSEPFFARMPPKSTGRDLFNPTWLQQQAGDTLERIRPEDVQATLLALTADTIADAVRTHAPRTASLVVCGGGARNGALMQRLAAQLPGTLVAASDDFGVPAHQVEALAFAWLARQCVRREPGNVYHATGAAGPRVLGTIYPA.

18–25 (GTSLDGVD) contributes to the ATP binding site.

It belongs to the anhydro-N-acetylmuramic acid kinase family.

The catalysed reaction is 1,6-anhydro-N-acetyl-beta-muramate + ATP + H2O = N-acetyl-D-muramate 6-phosphate + ADP + H(+). The protein operates within amino-sugar metabolism; 1,6-anhydro-N-acetylmuramate degradation. Its pathway is cell wall biogenesis; peptidoglycan recycling. Catalyzes the specific phosphorylation of 1,6-anhydro-N-acetylmuramic acid (anhMurNAc) with the simultaneous cleavage of the 1,6-anhydro ring, generating MurNAc-6-P. Is required for the utilization of anhMurNAc either imported from the medium or derived from its own cell wall murein, and thus plays a role in cell wall recycling. This Ralstonia nicotianae (strain ATCC BAA-1114 / GMI1000) (Ralstonia solanacearum) protein is Anhydro-N-acetylmuramic acid kinase.